The primary structure comprises 45 residues: Temporin-SHf (45 aa).

Positions 1–10 are cleaved as a signal peptide; that stretch reads FLGTINLSLC. Positions 11–35 are excised as a propeptide; sequence EEERDADEEERRDEPDESNVEVKKR. The residue at position 43 (Phe43) is a Phenylalanine amide.

This sequence belongs to the frog skin active peptide (FSAP) family. Temporin subfamily.

It localises to the secreted. Its subcellular location is the target cell membrane. Functionally, non-amphipathic alpha-helical antimicrobial peptide with potent activity against some Gram-positive bacteria (including methicillin-resistant Staphylococcus aureus (MRSA)), weak activity against Gram-negative bacteria and no activity against fungi. Permeabilizates membranes through a detergent-like effect probably via the carpet mechanism. More precisely, it strongly and selectively perturbs anionic bilayers membranes by interacting with the polar headgroups and the glycerol backbone region of the phospholipids, hence disrupting the acyl chain packing of the bilayer. Is not active against Leishmania (promastigote and axenic amastigote forms). Does not show hemolytic activity. Does not show toxicity for human THP-1-derived macrophages. The protein is Temporin-SHf of Pelophylax saharicus (Sahara frog).